The sequence spans 105 residues: Gastrin/cholecystokinin-like peptide (105 aa).

An N-terminal signal peptide occupies residues 1–20 (MKTKVFLGLILSAAVTACLC). Positions 21–38 (RPAAKAPGGSHRPTSSLA) are excised as a propeptide. Positions 24–51 (AKAPGGSHRPTSSLARRDWPEPPSQEQQ) are disordered. Tyrosine 87 carries the sulfotyrosine modification. Phenylalanine 93 bears the Phenylalanine amide mark. Residues 97–105 (STEDAADAA) constitute a propeptide that is removed on maturation.

This sequence belongs to the gastrin/cholecystokinin family.

It is found in the secreted. In terms of biological role, potent stimulus of gastric acid, but not of pancreatic secretion. This is Gastrin/cholecystokinin-like peptide from Gallus gallus (Chicken).